The following is a 403-amino-acid chain: ESX-5 secretion system protein EccE5 (403 aa).

The next 2 membrane-spanning stretches (helical) occupy residues 9–29 and 43–63; these read LALSWARLTTVFVIDLLILIV and IAWWVGVGIAVLVTLLSVVTY.

Belongs to the EccE family. As to quaternary structure, part of the ESX-5 / type VII secretion system (T7SS), which is composed of cytosolic and membrane components. The ESX-5 membrane complex is composed of EccB5, EccC5, EccD5 and EccE5.

Its subcellular location is the cell inner membrane. Part of the ESX-5 specialized secretion system, which is responsible for the secretion of EsxN and a number of PE_PGRS and PPE proteins. This chain is ESX-5 secretion system protein EccE5, found in Mycobacterium marinum (strain ATCC BAA-535 / M).